The sequence spans 306 residues: Ribosomal RNA small subunit methyltransferase H (306 aa).

S-adenosyl-L-methionine is bound by residues 33–35 (GGY), Asp-51, Phe-78, Asp-96, and Gln-103.

The protein belongs to the methyltransferase superfamily. RsmH family.

Its subcellular location is the cytoplasm. The enzyme catalyses cytidine(1402) in 16S rRNA + S-adenosyl-L-methionine = N(4)-methylcytidine(1402) in 16S rRNA + S-adenosyl-L-homocysteine + H(+). Specifically methylates the N4 position of cytidine in position 1402 (C1402) of 16S rRNA. This chain is Ribosomal RNA small subunit methyltransferase H, found in Rickettsia typhi (strain ATCC VR-144 / Wilmington).